The chain runs to 887 residues: Lon protease homolog 2, peroxisomal (887 aa).

The Lon N-terminal domain maps to 11–256 (LGILAFRNKV…KATELVDRHL (246 aa)). Residues 72-101 (YPGGGTDSGERNVKSQPGLSDSRKADGKSQ) are disordered. Residue 409-416 (GPPGVGKT) participates in ATP binding. The 186-residue stretch at 693–878 (VSNPGVSVGL…EVLEQAFEGG (186 aa)) folds into the Lon proteolytic domain. Residues Ser-784 and Lys-827 contribute to the active site. The short motif at 885 to 887 (ARL) is the Microbody targeting signal element.

The protein belongs to the peptidase S16 family.

It localises to the peroxisome matrix. It carries out the reaction Hydrolysis of proteins in presence of ATP.. ATP-dependent serine protease that mediates the selective degradation of misfolded and unassembled polypeptides in the peroxisomal matrix. Necessary for type 2 peroxisome targeting signal (PTS2)-containing protein processing and facilitates peroxisome matrix protein import. The sequence is that of Lon protease homolog 2, peroxisomal from Spinacia oleracea (Spinach).